The sequence spans 428 residues: UPF0597 protein BF3772 (428 aa).

The protein belongs to the UPF0597 family.

This is UPF0597 protein BF3772 from Bacteroides fragilis (strain YCH46).